We begin with the raw amino-acid sequence, 74 residues long: UPF0235 protein tsr1994 (74 aa).

Belongs to the UPF0235 family.

The chain is UPF0235 protein tsr1994 from Thermosynechococcus vestitus (strain NIES-2133 / IAM M-273 / BP-1).